The chain runs to 1252 residues: DNA-directed RNA polymerase subunit beta (1252 aa).

It belongs to the RNA polymerase beta chain family. In terms of assembly, the RNAP catalytic core consists of 2 alpha, 1 beta, 1 beta' and 1 omega subunit. When a sigma factor is associated with the core the holoenzyme is formed, which can initiate transcription.

The enzyme catalyses RNA(n) + a ribonucleoside 5'-triphosphate = RNA(n+1) + diphosphate. Its function is as follows. DNA-dependent RNA polymerase catalyzes the transcription of DNA into RNA using the four ribonucleoside triphosphates as substrates. The chain is DNA-directed RNA polymerase subunit beta from Chlamydia abortus (strain DSM 27085 / S26/3) (Chlamydophila abortus).